We begin with the raw amino-acid sequence, 317 residues long: 4-diphosphocytidyl-2-C-methyl-D-erythritol kinase (317 aa).

Lys-11 is a catalytic residue. Residue 99 to 109 coordinates ATP; it reads PVAAGLAGGST. Residue Asp-141 is part of the active site.

It belongs to the GHMP kinase family. IspE subfamily.

The enzyme catalyses 4-CDP-2-C-methyl-D-erythritol + ATP = 4-CDP-2-C-methyl-D-erythritol 2-phosphate + ADP + H(+). It functions in the pathway isoprenoid biosynthesis; isopentenyl diphosphate biosynthesis via DXP pathway; isopentenyl diphosphate from 1-deoxy-D-xylulose 5-phosphate: step 3/6. Functionally, catalyzes the phosphorylation of the position 2 hydroxy group of 4-diphosphocytidyl-2C-methyl-D-erythritol. In Nostoc sp. (strain PCC 7120 / SAG 25.82 / UTEX 2576), this protein is 4-diphosphocytidyl-2-C-methyl-D-erythritol kinase.